Here is a 241-residue protein sequence, read N- to C-terminus: Eukaryotic translation initiation factor 6 (241 aa).

The protein belongs to the eIF-6 family. Monomer. Associates with the 60S ribosomal subunit.

It is found in the cytoplasm. It localises to the nucleus. The protein localises to the nucleolus. In terms of biological role, binds to the 60S ribosomal subunit and prevents its association with the 40S ribosomal subunit to form the 80S initiation complex in the cytoplasm. Is also involved in ribosome biogenesis. Associates with pre-60S subunits in the nucleus and is involved in its nuclear export. In Encephalitozoon cuniculi (strain GB-M1) (Microsporidian parasite), this protein is Eukaryotic translation initiation factor 6.